The chain runs to 1265 residues: Shugoshin 2 (1265 aa).

Residues 69 to 116 (KENSRRITTEKMLLQKEVEKLNFENTFLRLKLNNLNKKLIDIEALMNN) adopt a coiled-coil conformation. Disordered regions lie at residues 161 to 202 (LTSN…STQD), 230 to 287 (DVPP…NLSA), 305 to 339 (LNCN…SARE), and 381 to 447 (GIKK…GAED). The segment covering 190–202 (SSGSTTQPLSTQD) has biased composition (polar residues). The segment covering 232-242 (PPRESHSHSDQ) has biased composition (basic and acidic residues). The segment covering 305–322 (LNCNNEINGHTNETNTEM) has biased composition (polar residues). 2 stretches are compositionally biased toward basic and acidic residues: residues 389-410 (KTNE…EKKR) and 425-446 (IGEK…RGAE). A coiled-coil region spans residues 452–476 (FNNEQLAQMNEQLAQVNELKKMTLQ). The tract at residues 499-526 (EQEETYSLSQSSGKFHQESKFDKGQNSL) is disordered. Positions 503–512 (TYSLSQSSGK) are enriched in polar residues. A coiled-coil region spans residues 603-626 (EQNESNINKLRKKVNRKTEIISGM). A compositionally biased stretch (basic residues) spans 1073–1083 (NKMTSKSKKRK). A disordered region spans residues 1073–1093 (NKMTSKSKKRKTSIDPSPESH). Ser-1144 carries the phosphoserine modification. Residues 1200-1265 (KVNRRTQKSG…EPSLRDKMRR (66 aa)) form a disordered region. Positions 1217–1230 (DLSNTSFVSNNTAE) are enriched in polar residues. The span at 1231–1243 (SENKSEDLSSERT) shows a compositional bias: basic and acidic residues.

This sequence belongs to the shugoshin family. Part of an astrin (SPAG5) -kinastrin (SKAP) complex containing KNSTRN, SPAG5, PLK1, DYNLL1 and SGO2. Interacts with CDCA8. Directly interacts with PPP2CA.

The protein resides in the nucleus. Its subcellular location is the chromosome. It is found in the centromere. It localises to the kinetochore. Functionally, cooperates with PPP2CA to protect centromeric cohesin from separase-mediated cleavage in oocytes specifically during meiosis I. Has a crucial role in protecting REC8 at centromeres from cleavage by separase. During meiosis, protects centromeric cohesion complexes until metaphase II/anaphase II transition, preventing premature release of meiosis-specific REC8 cohesin complexes from anaphase I centromeres. Is thus essential for an accurate gametogenesis. May act by targeting PPP2CA to centromeres, thus leading to cohesin dephosphorylation. Essential for recruiting KIF2C to the inner centromere and for correcting defective kinetochore attachments. Involved in centromeric enrichment of AUKRB in prometaphase. In Homo sapiens (Human), this protein is Shugoshin 2.